A 394-amino-acid chain; its full sequence is Elongation factor Tu 1 (394 aa).

Positions 10-204 (KPHVNVGTIG…HLDTYIPEPE (195 aa)) constitute a tr-type G domain. Residues 19-26 (GHVDHGKT) form a G1 region. 19-26 (GHVDHGKT) lines the GTP pocket. A Mg(2+)-binding site is contributed by threonine 26. The tract at residues 60-64 (GITIN) is G2. The interval 81-84 (DCPG) is G3. Residues 81–85 (DCPGH) and 136–139 (NKCD) each bind GTP. Positions 136 to 139 (NKCD) are G4. Positions 174-176 (SAL) are G5.

This sequence belongs to the TRAFAC class translation factor GTPase superfamily. Classic translation factor GTPase family. EF-Tu/EF-1A subfamily. In terms of assembly, monomer.

The protein localises to the cytoplasm. It catalyses the reaction GTP + H2O = GDP + phosphate + H(+). Its function is as follows. GTP hydrolase that promotes the GTP-dependent binding of aminoacyl-tRNA to the A-site of ribosomes during protein biosynthesis. This Haemophilus influenzae (strain 86-028NP) protein is Elongation factor Tu 1.